Here is a 251-residue protein sequence, read N- to C-terminus: Hydroxyacylglutathione hydrolase (251 aa).

7 residues coordinate Zn(2+): His-53, His-55, Asp-57, His-58, His-110, Asp-127, and His-165.

The protein belongs to the metallo-beta-lactamase superfamily. Glyoxalase II family. Monomer. The cofactor is Zn(2+).

It carries out the reaction an S-(2-hydroxyacyl)glutathione + H2O = a 2-hydroxy carboxylate + glutathione + H(+). It functions in the pathway secondary metabolite metabolism; methylglyoxal degradation; (R)-lactate from methylglyoxal: step 2/2. In terms of biological role, thiolesterase that catalyzes the hydrolysis of S-D-lactoyl-glutathione to form glutathione and D-lactic acid. The sequence is that of Hydroxyacylglutathione hydrolase from Pectobacterium atrosepticum (strain SCRI 1043 / ATCC BAA-672) (Erwinia carotovora subsp. atroseptica).